A 303-amino-acid chain; its full sequence is Uridine diphosphate glucose pyrophosphatase NUDT22 (303 aa).

Residues phenylalanine 56, tyrosine 87, arginine 139, alanine 144, aspartate 151, histidine 156, and glutamate 158 each coordinate substrate. In terms of domain architecture, Nudix hydrolase spans 118 to 285; it reads ADPLGVGAAL…KGAIILYNRV (168 aa). The interval 148 to 168 is disordered; that stretch reads GLVDVPGGHPEPQALCPGGSP. Positions 175 to 196 match the Nudix box motif; the sequence is GQLVVHELFSSVLQEICDEVNL. Residues glutamate 189 and glutamate 193 each contribute to the Mg(2+) site. Serine 274 lines the substrate pocket.

It belongs to the Nudix hydrolase family. Mg(2+) serves as cofactor.

The enzyme catalyses UDP-sugar + H2O = UMP + alpha-D-aldose 1-phosphate.. In terms of biological role, hydrolyzes UDP-glucose to glucose 1-phosphate and UMP and UDP-galactose to galactose 1-phosphate and UMP. Preferred substrate is UDP-glucose. This chain is Uridine diphosphate glucose pyrophosphatase NUDT22 (NUDT22), found in Homo sapiens (Human).